The chain runs to 521 residues: Glutamate--cysteine ligase (521 aa).

The protein belongs to the glutamate--cysteine ligase type 1 family. Type 1 subfamily.

The catalysed reaction is L-cysteine + L-glutamate + ATP = gamma-L-glutamyl-L-cysteine + ADP + phosphate + H(+). Its pathway is sulfur metabolism; glutathione biosynthesis; glutathione from L-cysteine and L-glutamate: step 1/2. This Aliivibrio fischeri (strain MJ11) (Vibrio fischeri) protein is Glutamate--cysteine ligase.